Consider the following 276-residue polypeptide: Omega-amidase NIT2 (276 aa).

One can recognise a CN hydrolase domain in the interval 4–248 (FRLALIQLQV…ETILYSDIDL (245 aa)). Ser26 carries the post-translational modification Phosphoserine. Glu43 (proton acceptor) is an active-site residue. N6-acetyllysine; alternate is present on Lys68. The residue at position 68 (Lys68) is an N6-succinyllysine; alternate. Lys112 serves as the catalytic Proton donor. An N6-succinyllysine mark is found at Lys123 and Lys130. Cys153 functions as the Nucleophile in the catalytic mechanism.

Belongs to the carbon-nitrogen hydrolase superfamily. NIT1/NIT2 family. As to quaternary structure, homodimer.

The protein localises to the cytoplasm. It carries out the reaction a monoamide of a dicarboxylate + H2O = a dicarboxylate + NH4(+). The catalysed reaction is 2-oxoglutaramate + H2O = 2-oxoglutarate + NH4(+). The enzyme catalyses 2-oxosuccinamate + H2O = oxaloacetate + NH4(+). In terms of biological role, has omega-amidase activity. The role of omega-amidase is to remove potentially toxic intermediates by converting 2-oxoglutaramate and 2-oxosuccinamate to biologically useful 2-oxoglutarate and oxaloacetate, respectively. Can also hydrolyze gamma-monomethyl-alpha-ketoglutarate in vitro. This chain is Omega-amidase NIT2, found in Mus musculus (Mouse).